We begin with the raw amino-acid sequence, 2157 residues long: DExH-box ATP-dependent RNA helicase DExH14 (2157 aa).

A disordered region spans residues 374-394; that stretch reads KAASNTQSRMPTYGTQVTVQT. Residues 375 to 394 show a composition bias toward polar residues; it reads AASNTQSRMPTYGTQVTVQT. The 183-residue stretch at 517-699 folds into the Helicase ATP-binding 1 domain; sequence QTVYHTNENI…FLRVNTDTGL (183 aa). 530 to 537 contributes to the ATP binding site; the sequence is APTGAGKT. The short motif at 641-644 is the DEVH box element; that stretch reads DEVH. Residues 734 to 932 form the Helicase C-terminal 1 domain; it reads CYKKVVDSIK…SLKDNLNAEV (199 aa). In terms of domain architecture, SEC63 1 spans 1008 to 1315; sequence CTELGRVASH…LHAETYFTIS (308 aa). Positions 1365–1540 constitute a Helicase ATP-binding 2 domain; sequence HVLYHTDNNV…WLGVGEIGLF (176 aa). 1378-1385 contacts ATP; sequence APTGSGKT. Residues 1482–1485 carry the DEIH box motif; it reads DEIH. Positions 1571–1780 constitute a Helicase C-terminal 2 domain; the sequence is NKPAYAAICT…GTIGNKEDAV (210 aa). In terms of domain architecture, SEC63 2 spans 1839–2150; that stretch reads PTMLGTIASQ…YLGFEQEHSI (312 aa).

It belongs to the DExH box helicase family.

The protein localises to the nucleus. It carries out the reaction ATP + H2O = ADP + phosphate + H(+). RNA helicase that plays an essential role in pre-mRNA splicing as component of the U5 snRNP and U4/U6-U5 tri-snRNP complexes. Involved in spliceosome assembly, activation and disassembly. This Arabidopsis thaliana (Mouse-ear cress) protein is DExH-box ATP-dependent RNA helicase DExH14.